The chain runs to 244 residues: MWFKKRIIIKETNILLKVDDKGYFKKAEEIILKNRLELERYILKNPYFLTSYFPVDVEDDAPEIVRLMAIAGEIANVGPMASVAGAIAEMLIKNLNAKNIIAENGGDICLRAKKDVIIGLYAGNSKITGEVGFRLKKEKIKNIYGVCTSSATVGHSVSFGEADAVTVFAKSSAIADAAATAICNASRGRDEEEMINNALEKADEIKKIDGIFVVVKDKVGIKGKIPELVKTDKRITLGELFDIY.

It belongs to the UPF0280 family.

The sequence is that of UPF0280 protein MJ1526 from Methanocaldococcus jannaschii (strain ATCC 43067 / DSM 2661 / JAL-1 / JCM 10045 / NBRC 100440) (Methanococcus jannaschii).